The following is a 68-amino-acid chain: uncharacterized protein (68 aa).

This is an uncharacterized protein from Orgyia pseudotsugata (Douglas-fir tussock moth).